The sequence spans 94 residues: Sulfocarbamoylase-1 (94 aa).

Homodimer. As to expression, ubiquitous (at protein level). Highest levels of expression in crystalline style followed by digestive gland and mantle.

Its activity is regulated as follows. Strongly inhibited by the serine proteinase inhibitor AEBSF. Weakly inhibited by the proteinase inhibitors BSF and aprotinin, and by EDTA. Not inhibited by the proteinase inhibitors bestatin, E-64 and leupeptin. Its function is as follows. Hydrolysis of sulfocarbamoyl esters of paralytic shellfish toxins. Does not hydrolyze the carbamoyl esters of paralytic shellfish toxins. Ester hydrolysis is significantly affected by the stereochemistry of sulfate esters at C-11 of the substrate toxin. In Megangulus venulosus (Japanese bivalve), this protein is Sulfocarbamoylase-1.